A 108-amino-acid chain; its full sequence is uncharacterized protein (108 aa).

Residues 7–27 (FIPMLLVANAAPYFFYPIFML) traverse the membrane as a helical segment.

This sequence to N.crassa NCU05373.1.

It is found in the membrane. This is an uncharacterized protein from Schizosaccharomyces pombe (strain 972 / ATCC 24843) (Fission yeast).